The sequence spans 57 residues: Small ribosomal subunit protein bS21 (57 aa).

The tract at residues 35–57 is disordered; sequence RERYEKPSLRRKRKQEAARKRNR.

Belongs to the bacterial ribosomal protein bS21 family.

The protein is Small ribosomal subunit protein bS21 of Thermosynechococcus vestitus (strain NIES-2133 / IAM M-273 / BP-1).